The chain runs to 437 residues: UDP-N-acetylmuramate--L-alanine ligase (437 aa).

ATP is bound at residue 114–120 (GTHGKTS).

Belongs to the MurCDEF family.

It localises to the cytoplasm. It carries out the reaction UDP-N-acetyl-alpha-D-muramate + L-alanine + ATP = UDP-N-acetyl-alpha-D-muramoyl-L-alanine + ADP + phosphate + H(+). It functions in the pathway cell wall biogenesis; peptidoglycan biosynthesis. Its function is as follows. Cell wall formation. The polypeptide is UDP-N-acetylmuramate--L-alanine ligase (Lactobacillus gasseri (strain ATCC 33323 / DSM 20243 / BCRC 14619 / CIP 102991 / JCM 1131 / KCTC 3163 / NCIMB 11718 / NCTC 13722 / AM63)).